The sequence spans 66 residues: Beta-toxin Cbo4 (66 aa).

Residues 1–66 (KEGYIVDYHT…VWPLPNKRCK (66 aa)) form the LCN-type CS-alpha/beta domain. Cystine bridges form between cysteine 12–cysteine 65, cysteine 16–cysteine 41, cysteine 25–cysteine 46, and cysteine 29–cysteine 48. The residue at position 66 (lysine 66) is a Lysine amide.

The protein belongs to the long (4 C-C) scorpion toxin superfamily. Sodium channel inhibitor family. Beta subfamily. As to expression, expressed by the venom gland.

The protein resides in the secreted. Beta toxins bind voltage-independently at site-4 of sodium channels and shift the voltage of activation toward more negative potentials thereby affecting sodium channel activation and promoting spontaneous and repetitive firing. Is active on the human voltage-gated sodium channels Nav1.4/SCN4A, Nav1.5/SCN5A and Nav1.6/SCN8A when tested at 200 nM. In vivo, is toxic to mice when intraperitoneally injected. The polypeptide is Beta-toxin Cbo4 (Centruroides bonito (Scorpion)).